The chain runs to 212 residues: Ras-like protein (212 aa).

15-22 contacts GTP; it reads GGGGVGKS. Positions 37–45 match the Effector region motif; the sequence is YDPTIEDSY. GTP is bound by residues 62–66 and 121–124; these read DTAGQ and NKCD. S-palmitoyl cysteine attachment occurs at residues cysteine 205 and cysteine 206. Residue cysteine 209 is modified to Cysteine methyl ester. Cysteine 209 carries the S-geranylgeranyl cysteine lipid modification. The propeptide at 210–212 is removed in mature form; that stretch reads IVM.

Belongs to the small GTPase superfamily. Ras family.

The protein localises to the cell membrane. The catalysed reaction is GTP + H2O = GDP + phosphate + H(+). Alternates between an inactive form bound to GDP and an active form bound to GTP. Activated by a guanine nucleotide-exchange factor (GEF) and inactivated by a GTPase-activating protein (GAP). The protein is Ras-like protein (rasA) of Emericella nidulans (strain FGSC A4 / ATCC 38163 / CBS 112.46 / NRRL 194 / M139) (Aspergillus nidulans).